We begin with the raw amino-acid sequence, 336 residues long: F420-dependent glucose-6-phosphate dehydrogenase (336 aa).

D39 contacts coenzyme F420-(gamma-Glu)n. Catalysis depends on H40, which acts as the Proton donor. Coenzyme F420-(gamma-Glu)n is bound by residues T76 and T107 to G108. The active-site Proton acceptor is E109. Coenzyme F420-(gamma-Glu)n contacts are provided by residues N112, G177–G178, and E180–V181. Residues T195, K198, K259, and R283 each contribute to the substrate site.

This sequence belongs to the F420-dependent glucose-6-phosphate dehydrogenase family. Homodimer.

The catalysed reaction is oxidized coenzyme F420-(gamma-L-Glu)(n) + D-glucose 6-phosphate + H(+) = 6-phospho-D-glucono-1,5-lactone + reduced coenzyme F420-(gamma-L-Glu)(n). In terms of biological role, catalyzes the coenzyme F420-dependent oxidation of glucose 6-phosphate (G6P) to 6-phosphogluconolactone. Appears to have a role in resistance to oxidative stress, via its consumption of G6P that serves as a source of reducing power to combat oxidative stress in mycobacteria. The protein is F420-dependent glucose-6-phosphate dehydrogenase of Mycobacterium leprae (strain Br4923).